Reading from the N-terminus, the 174-residue chain is NADH-quinone oxidoreductase subunit B 1 (174 aa).

[4Fe-4S] cluster contacts are provided by C38, C39, C104, and C133.

Belongs to the complex I 20 kDa subunit family. As to quaternary structure, NDH-1 is composed of 14 different subunits. Subunits NuoB, C, D, E, F, and G constitute the peripheral sector of the complex. It depends on [4Fe-4S] cluster as a cofactor.

Its subcellular location is the cell membrane. It carries out the reaction a quinone + NADH + 5 H(+)(in) = a quinol + NAD(+) + 4 H(+)(out). Functionally, NDH-1 shuttles electrons from NADH, via FMN and iron-sulfur (Fe-S) centers, to quinones in the respiratory chain. The immediate electron acceptor for the enzyme in this species is believed to be ubiquinone. Couples the redox reaction to proton translocation (for every two electrons transferred, four hydrogen ions are translocated across the cytoplasmic membrane), and thus conserves the redox energy in a proton gradient. The protein is NADH-quinone oxidoreductase subunit B 1 of Chloroflexus aggregans (strain MD-66 / DSM 9485).